Here is a 105-residue protein sequence, read N- to C-terminus: Vitelline membrane protein Vm32E (105 aa).

An N-terminal signal peptide occupies residues 1–17 (MHFIALIVAVCVAFAGA). The VM domain maps to 25–62 (GIAAPPCPKNYLFSCQPNLVPAPCAQEAASYGSAGAYA).

This sequence belongs to the vitelline membrane family.

It localises to the secreted. Its function is as follows. Major early eggshell protein. This is Vitelline membrane protein Vm32E from Drosophila ananassae (Fruit fly).